We begin with the raw amino-acid sequence, 119 residues long: Large ribosomal subunit protein bL20 (119 aa).

The protein belongs to the bacterial ribosomal protein bL20 family.

In terms of biological role, binds directly to 23S ribosomal RNA and is necessary for the in vitro assembly process of the 50S ribosomal subunit. It is not involved in the protein synthesizing functions of that subunit. This chain is Large ribosomal subunit protein bL20, found in Rhodopseudomonas palustris (strain BisB18).